Reading from the N-terminus, the 452-residue chain is Adenosylmethionine-8-amino-7-oxononanoate aminotransferase (452 aa).

116 to 117 (GS) serves as a coordination point for pyridoxal 5'-phosphate. Residue Y152 participates in substrate binding. Position 257 (D257) interacts with pyridoxal 5'-phosphate. The substrate site is built by K286, G321, and R414. K286 is modified (N6-(pyridoxal phosphate)lysine).

It belongs to the class-III pyridoxal-phosphate-dependent aminotransferase family. BioA subfamily. Homodimer. Pyridoxal 5'-phosphate serves as cofactor.

The protein localises to the cytoplasm. It catalyses the reaction (8S)-8-amino-7-oxononanoate + S-adenosyl-L-methionine = S-adenosyl-4-methylsulfanyl-2-oxobutanoate + (7R,8S)-7,8-diammoniononanoate. The protein operates within cofactor biosynthesis; biotin biosynthesis; 7,8-diaminononanoate from 8-amino-7-oxononanoate (SAM route): step 1/1. Its function is as follows. Catalyzes the transfer of the alpha-amino group from S-adenosyl-L-methionine (SAM) to 7-keto-8-aminopelargonic acid (KAPA) to form 7,8-diaminopelargonic acid (DAPA). It is the only aminotransferase known to utilize SAM as an amino donor. In Staphylococcus aureus (strain NCTC 8325 / PS 47), this protein is Adenosylmethionine-8-amino-7-oxononanoate aminotransferase.